Here is a 141-residue protein sequence, read N- to C-terminus: Nucleoside diphosphate kinase (141 aa).

ATP-binding residues include Lys-11, Phe-59, Arg-87, Thr-93, Arg-104, and Asn-114. The Pros-phosphohistidine intermediate role is filled by His-117.

Belongs to the NDK family. As to quaternary structure, homotetramer. The cofactor is Mg(2+).

The protein resides in the cytoplasm. It carries out the reaction a 2'-deoxyribonucleoside 5'-diphosphate + ATP = a 2'-deoxyribonucleoside 5'-triphosphate + ADP. It catalyses the reaction a ribonucleoside 5'-diphosphate + ATP = a ribonucleoside 5'-triphosphate + ADP. Its function is as follows. Major role in the synthesis of nucleoside triphosphates other than ATP. The ATP gamma phosphate is transferred to the NDP beta phosphate via a ping-pong mechanism, using a phosphorylated active-site intermediate. This Leptothrix cholodnii (strain ATCC 51168 / LMG 8142 / SP-6) (Leptothrix discophora (strain SP-6)) protein is Nucleoside diphosphate kinase.